The sequence spans 170 residues: ATP synthase subunit b (170 aa).

Residues 15 to 37 (FNLFETNILNWAVVIFGLYKFLP) traverse the membrane as a helical segment. The tract at residues 72-98 (AKKDLSSAEEKASQIKADSLKRSESIR) is disordered.

Belongs to the ATPase B chain family. In terms of assembly, F-type ATPases have 2 components, F(1) - the catalytic core - and F(0) - the membrane proton channel. F(1) has five subunits: alpha(3), beta(3), gamma(1), delta(1), epsilon(1). F(0) has four main subunits: a(1), b(1), b'(1) and c(10-14). The alpha and beta chains form an alternating ring which encloses part of the gamma chain. F(1) is attached to F(0) by a central stalk formed by the gamma and epsilon chains, while a peripheral stalk is formed by the delta, b and b' chains.

The protein resides in the cellular thylakoid membrane. Its function is as follows. F(1)F(0) ATP synthase produces ATP from ADP in the presence of a proton or sodium gradient. F-type ATPases consist of two structural domains, F(1) containing the extramembraneous catalytic core and F(0) containing the membrane proton channel, linked together by a central stalk and a peripheral stalk. During catalysis, ATP synthesis in the catalytic domain of F(1) is coupled via a rotary mechanism of the central stalk subunits to proton translocation. Functionally, component of the F(0) channel, it forms part of the peripheral stalk, linking F(1) to F(0). The polypeptide is ATP synthase subunit b (Prochlorococcus marinus (strain MIT 9215)).